The sequence spans 1001 residues: E3 ubiquitin-protein ligase BRE1B (1001 aa).

Residues 1–31 (MSGLGNKRAAGDGGSGPPEKKLSREEKTTTT) form a disordered region. A compositionally biased stretch (basic and acidic residues) spans 18–28 (PEKKLSREEKT). At lysine 20 the chain carries N6-acetyllysine. Serine 42 bears the Phosphoserine mark. The stretch at 45–91 (EEIDLKVLQFKNKKLAERLEQRQACEDELRERIEKLEKRQATDDATL) forms a coiled coil. The segment at 116–149 (GELSSAPEAPGTQEGPTCDGTPLPEPGTSELREP) is disordered. Coiled coils occupy residues 228 to 377 (ARTR…LRSL) and 437 to 523 (LQKK…AQTS). 2 positions are modified to N6-acetyllysine: lysine 355 and lysine 517. The tract at residues 516 to 646 (GKLRAQTSGS…EKAKVEEAKR (131 aa)) is disordered. Residues 520 to 531 (AQTSGSTHSTPN) are compositionally biased toward polar residues. Serine 528 is modified (phosphoserine). Glycyl lysine isopeptide (Lys-Gly) (interchain with G-Cter in SUMO2) cross-links involve residues lysine 578 and lysine 579. Serine 585 carries the post-translational modification Phosphoserine. 2 stretches are compositionally biased toward basic and acidic residues: residues 602–619 (RGRE…EREG) and 633–646 (RADR…EAKR). Residues 627–946 (VASALSRADR…EEIKEYKARL (320 aa)) are a coiled coil. The RING-type zinc-finger motif lies at 948-987 (CPCCNTRKKDAVLTKCFHVFCFECVRGRYEARQRKCPKCN).

It belongs to the BRE1 family. In terms of assembly, component of the RNF20/40 complex (also known as BRE1 complex) probably composed of 2 copies of RNF20/BRE1A and 2 copies of RNF40/BRE1B. Interacts with UBE2E1/UBCH6. Interacts with RB1 and WAC.

The protein localises to the nucleus. The catalysed reaction is S-ubiquitinyl-[E2 ubiquitin-conjugating enzyme]-L-cysteine + [acceptor protein]-L-lysine = [E2 ubiquitin-conjugating enzyme]-L-cysteine + N(6)-ubiquitinyl-[acceptor protein]-L-lysine.. It functions in the pathway protein modification; protein ubiquitination. Its function is as follows. Component of the RNF20/40 E3 ubiquitin-protein ligase complex that mediates monoubiquitination of 'Lys-120' of histone H2B (H2BK120ub1). H2BK120ub1 gives a specific tag for epigenetic transcriptional activation and is also prerequisite for histone H3 'Lys-4' and 'Lys-79' methylation (H3K4me and H3K79me, respectively). It thereby plays a central role in histone code and gene regulation. The RNF20/40 complex forms a H2B ubiquitin ligase complex in cooperation with the E2 enzyme UBE2A or UBE2B; reports about the cooperation with UBE2E1/UBCH are contradictory. Required for transcriptional activation of Hox genes. This Macaca fascicularis (Crab-eating macaque) protein is E3 ubiquitin-protein ligase BRE1B (RNF40).